A 145-amino-acid chain; its full sequence is Basic phospholipase A2 beta-bungarotoxin A2 chain (145 aa).

A signal peptide spans methionine 1 to alanine 17. Positions alanine 18–leucine 25 are excised as a propeptide. Intrachain disulfides connect cysteine 52–cysteine 144, cysteine 54–cysteine 70, cysteine 69–cysteine 125, cysteine 76–cysteine 118, cysteine 86–cysteine 111, and cysteine 104–cysteine 116. Ca(2+)-binding residues include tyrosine 53, glycine 55, and glycine 57. The active site involves histidine 73. Residue aspartate 74 participates in Ca(2+) binding. Aspartate 119 is a catalytic residue.

This sequence belongs to the phospholipase A2 family. Group I subfamily. D49 sub-subfamily. As to quaternary structure, heterodimer; disulfide-linked. The A chains have phospholipase A2 activity and the B chains show homology with the basic protease inhibitors. The A2 chain is found in beta-3 and beta-4 bungarotoxins. Ca(2+) serves as cofactor. As to expression, expressed by the venom gland.

The protein resides in the secreted. The catalysed reaction is a 1,2-diacyl-sn-glycero-3-phosphocholine + H2O = a 1-acyl-sn-glycero-3-phosphocholine + a fatty acid + H(+). In terms of biological role, snake venom phospholipase A2 (PLA2) that inhibits neuromuscular transmission by blocking acetylcholine release from the nerve termini. PLA2 catalyzes the calcium-dependent hydrolysis of the 2-acyl groups in 3-sn-phosphoglycerides. This is Basic phospholipase A2 beta-bungarotoxin A2 chain from Bungarus multicinctus (Many-banded krait).